Consider the following 151-residue polypeptide: Large ribosomal subunit protein uL15 (151 aa).

A disordered region spans residues 1-58; sequence MELNQLKSVPKARNHKTKTLGRGHGSGLGKTSGRGQKGQKARKSGLTRPGFEGGQTPL. Positions 10-21 are enriched in basic residues; the sequence is PKARNHKTKTLG. The span at 22-36 shows a compositional bias: gly residues; the sequence is RGHGSGLGKTSGRGQ.

Belongs to the universal ribosomal protein uL15 family. In terms of assembly, part of the 50S ribosomal subunit.

In terms of biological role, binds to the 23S rRNA. This is Large ribosomal subunit protein uL15 from Mycoplasma pneumoniae (strain ATCC 29342 / M129 / Subtype 1) (Mycoplasmoides pneumoniae).